A 599-amino-acid polypeptide reads, in one-letter code: MLANETNKLLLSSQQEKPNHYTYLKEFRVEQCQSFLQHKCNQHRPFVCFNWHFQNQRRRRPVRKRDGTFNYSADNYCTKYDETTGICPEGDECPYLHRTAGDTERRYHLRYYKTCMCVHDTDSRGYCVKNGLHCAFAHGMQDQRPPVYDIKELETLQNAESTLDSTNALNALDKERNLMNEDPKWQDTNYVLANYKTEPCKRPPRLCRQGYACPQYHNSKDKRRSPRKYKYRSTPCPNVKHGEEWGEPGNCEAGDNCQYCHTRTEQQFHPEIYKSTKCNDVQQAGYCPRSVFCAFAHVEPCSMDDPRENSLSASLANTSLLTRSSAPINIPNTTLSNSINDFNSGSFAVNIPSSSLTYSPTNHANLFNVDAFNYGGSNKLSNSLSATQNDSSLFFPSRIISPGFGDGLSISPSVRISELNTIRDDINSSSVGNSLFENTLNTAKNAFSLQSLQSQNNSDLGRITNELLTKNAQIHKLNGRFEDMACKLKIAELHRDKAKQEAQEWKERYDLAQIQLNLPAELRDLSIQKLKQLQSKLRTDLEEVDKVLYLENAKKCMKCEENNRTVTLEPCNHLSICNTCAESVTECPYCQVPVITTHT.

5 consecutive C3H1-type zinc fingers follow at residues 71-100, 111-141, 194-220, 230-264, and 272-300; these read YSADNYCTKYDETTGICPEGDECPYLHRTA, YYKTCMCVHDTDSRGYCVKNGLHCAFAHGMQ, NYKTEPCKRPPRLCRQGYACPQYHNSK, KYRSTPCPNVKHGEEWGEPGNCEAGDNCQYCHTRT, and IYKSTKCNDVQQAGYCPRSVFCAFAHVEP. Ser-411 is modified (phosphoserine). The segment at 556–591 adopts an RING-type zinc-finger fold; that stretch reads CMKCEENNRTVTLEPCNHLSICNTCAESVTECPYCQ.

It belongs to the unkempt family. Ubiquitous in most somatic tissues from syncytial embryo through to embryo stage 15. Expression becomes restricted predominantly to the CNS at stages 16 and 17.

Its subcellular location is the cytoplasm. Its function is as follows. Essential for late larval/early pupal development. The chain is RING finger protein unkempt (unk) from Drosophila melanogaster (Fruit fly).